A 219-amino-acid polypeptide reads, in one-letter code: Cytochrome b6 (219 aa).

Residues 32–52 (IFYCFGGIVLTCFIIQAATGF) form a helical membrane-spanning segment. Cys35 provides a ligand contact to heme c. Heme b is bound by residues His86 and His100. 3 helical membrane-spanning segments follow: residues 90-110 (SGLM…TAGF), 116-136 (LTWI…VTGY), and 190-210 (AHTF…FLMI). 2 residues coordinate heme b: His191 and His206.

The protein belongs to the cytochrome b family. PetB subfamily. As to quaternary structure, the 4 large subunits of the cytochrome b6-f complex are cytochrome b6, subunit IV (17 kDa polypeptide, PetD), cytochrome f and the Rieske protein, while the 4 small subunits are PetG, PetL, PetM and PetN. The complex functions as a dimer. The cofactor is heme b. Requires heme c as cofactor.

The protein localises to the plastid. It is found in the chloroplast thylakoid membrane. In terms of biological role, component of the cytochrome b6-f complex, which mediates electron transfer between photosystem II (PSII) and photosystem I (PSI), cyclic electron flow around PSI, and state transitions. This is Cytochrome b6 from Amphidinium operculatum (Dinoflagellate).